A 184-amino-acid polypeptide reads, in one-letter code: Large ribosomal subunit protein uL15 (184 aa).

The interval methionine 1–lysine 45 is disordered. Residues arginine 21–asparagine 35 show a composition bias toward gly residues.

The protein belongs to the universal ribosomal protein uL15 family. Part of the 50S ribosomal subunit.

Its function is as follows. Binds to the 23S rRNA. The protein is Large ribosomal subunit protein uL15 of Chlorobium chlorochromatii (strain CaD3).